The following is a 677-amino-acid chain: Gamma-tubulin complex subunit mod21 (677 aa).

In terms of assembly, component of the gamma-tubulin complex composed of at least alp4, alp6, alp16, ghf1, gtb1 and mod21.

The protein resides in the cytoplasm. The protein localises to the cytoskeleton. Its subcellular location is the microtubule organizing center. It is found in the spindle pole body. Component of the gamma-tubulin complex that is required for the regulation of both interphase microtubule organization and nucleation, and mitotic bipolar spindles. Required for correct septation. The polypeptide is Gamma-tubulin complex subunit mod21 (Schizosaccharomyces pombe (strain 972 / ATCC 24843) (Fission yeast)).